The chain runs to 152 residues: MKLILQEKVANLGNIGDQVVVKPGYARNFLLPLGKAVPATPEHIAEFEKQRAELEKAAAELLAKAKARAKKLEDKSFKITANASDEGRLFGSIGPREIAQAITEAGIEIEKREVDLSQGPIRQVGEYEVPLRLHTDVSVNVKIEVAPENSNS.

Belongs to the bacterial ribosomal protein bL9 family.

In terms of biological role, binds to the 23S rRNA. The polypeptide is Large ribosomal subunit protein bL9 (Coxiella burnetii (strain RSA 331 / Henzerling II)).